The primary structure comprises 468 residues: Cysteine--tRNA ligase (468 aa).

Cysteine 33 serves as a coordination point for Zn(2+). The 'HIGH' region signature appears at 35 to 45 (ATVQGLPHIGH). Zn(2+) is bound by residues cysteine 211, histidine 236, and glutamate 240. The 'KMSKS' region signature appears at 267–271 (KMSKS). Lysine 270 contacts ATP.

It belongs to the class-I aminoacyl-tRNA synthetase family. As to quaternary structure, monomer. It depends on Zn(2+) as a cofactor.

The protein localises to the cytoplasm. It carries out the reaction tRNA(Cys) + L-cysteine + ATP = L-cysteinyl-tRNA(Cys) + AMP + diphosphate. The polypeptide is Cysteine--tRNA ligase (Mycobacterium marinum (strain ATCC BAA-535 / M)).